We begin with the raw amino-acid sequence, 117 residues long: Crustacean hyperglycemic hormones 3 (117 aa).

A signal peptide spans 1-24; sequence MVTPRMLSALSAVLLLVLTASSSA. Intrachain disulfides connect Cys50–Cys86, Cys66–Cys82, and Cys69–Cys95. Val115 is subject to Valine amide.

It belongs to the arthropod CHH/MIH/GIH/VIH hormone family. In terms of tissue distribution, produced by the medulla terminalis X-organ in the eyestalks and transported to the sinus gland where they are stored and released.

The protein resides in the secreted. Its function is as follows. Hormone found in the sinus gland of isopods and decapods which controls the blood sugar level. Has a secretagogue action over the amylase released from the midgut gland. May act as a stress hormone and may be involved in the control of molting and reproduction. The chain is Crustacean hyperglycemic hormones 3 from Penaeus japonicus (Kuruma prawn).